A 611-amino-acid chain; its full sequence is Dehydrogenase pkfF (611 aa).

Positions 1–19 (MRHTALLPLVSSFIVPALA) are cleaved as a signal peptide. N-linked (GlcNAc...) asparagine glycans are attached at residues Asn28 and Asn38. Residues 50 to 51 (TS), 71 to 72 (EA), and 137 to 140 (HYMV) contribute to the FAD site. N-linked (GlcNAc...) asparagine glycosylation is found at Asn180, Asn187, Asn240, Asn272, Asn409, and Asn471. Catalysis depends on His547, which acts as the Proton acceptor. FAD is bound by residues Ala581 and 592–593 (PQ).

This sequence belongs to the GMC oxidoreductase family. FAD is required as a cofactor.

The protein operates within secondary metabolite biosynthesis. Functionally, dehydrogenase; part of the gene cluster that mediates the biosynthesis of aspernidine A, a prenylated isoindolinone. The starting point of the biosynthesis of aspernidin A is the production of orsellinaldehyde by the non-reducing polyketide synthase pkfA. Hydroxylation, methylation of one of the phenol groups, and prenylation, presumably catalyzed by the prenyltransferase pkfE, would be needed to yield aspernidine D. Subsequently, the cytochrome P450 monooxygenase pkfB is responsible for hydroxylation of aspernidine D to yield aspernidine E. The dehydrogenase pkfF may be responsible for further oxidation of aspernidine E to form a dialdehyde intermediate which is further transformed in a series of steps, some of which are enzyme-mediated, to generate aspernidine A. The possibility that additional enzymes outside of the cluster are involved in aspernidine A biosynthesis cannot be excluded. The sequence is that of Dehydrogenase pkfF from Emericella nidulans (strain FGSC A4 / ATCC 38163 / CBS 112.46 / NRRL 194 / M139) (Aspergillus nidulans).